We begin with the raw amino-acid sequence, 971 residues long: Zinc finger CCCH domain-containing protein 7A (971 aa).

TPR repeat units follow at residues 43–76 (VRNL…ADYA), 89–122 (EKLY…NASN), and 124–156 (KALY…VPQD). Phosphothreonine is present on T210. C3H1-type zinc fingers lie at residues 634–656 (LCRH…HSLV) and 769–797 (PLQF…HSPE). The segment at 857 to 881 (FHCWMCGKNCNSEKQWQGHISSEKH) adopts a C2H2-type zinc-finger fold. The C3H1-type 3 zinc finger occupies 906 to 928 (ICDRYMNGTCPEGNSCKFAHGNA). A coiled-coil region spans residues 924 to 952 (AHGNAELHEWEERRDALKMKLNKARKDHL).

The protein resides in the nucleus. In terms of biological role, may be a specific regulator of miRNA biogenesis. Binds to microRNAs MIR7-1, MIR16-2 and MIR29A hairpins recognizing the 3'-ATA(A/T)-5' motif in the apical loop. The protein is Zinc finger CCCH domain-containing protein 7A (ZC3H7A) of Homo sapiens (Human).